A 225-amino-acid polypeptide reads, in one-letter code: Ribosomal RNA small subunit methyltransferase G (225 aa).

S-adenosyl-L-methionine-binding positions include glycine 96, phenylalanine 101, 146–147, and arginine 160; that span reads AE.

This sequence belongs to the methyltransferase superfamily. RNA methyltransferase RsmG family.

The protein resides in the cytoplasm. Specifically methylates the N7 position of a guanine in 16S rRNA. This is Ribosomal RNA small subunit methyltransferase G from Mycoplasma mobile (strain ATCC 43663 / 163K / NCTC 11711) (Mesomycoplasma mobile).